The primary structure comprises 176 residues: Inner membrane-spanning protein YciB (176 aa).

Helical transmembrane passes span 3–23 (FLFD…WGIF), 24–44 (TATA…AFRH), 49–69 (TMLW…LVLH), 81–101 (LYWL…NNLI), 119–139 (LNVA…YVVH), and 149–169 (FKLF…SLWL).

Belongs to the YciB family.

The protein resides in the cell inner membrane. In terms of biological role, plays a role in cell envelope biogenesis, maintenance of cell envelope integrity and membrane homeostasis. This is Inner membrane-spanning protein YciB from Burkholderia ambifaria (strain MC40-6).